The sequence spans 371 residues: Envelope glycoprotein M (371 aa).

Residues 1-13 (MAPSHVDKVNTRT) are Intravirion-facing. The helical transmembrane segment at 14-34 (WSASIVFMVLTFVNVSVHLVL) threads the bilayer. The Virion surface segment spans residues 35–79 (SNFPHLGYPCVYYHVVDFERLNMSAYNVMHLHTPMLFLDSVQLVC). The chain crosses the membrane as a helical span at residues 80-100 (YAVFMQLVFLAVTIYYLVCWI). Over 101–126 (KISMRKDKGMSLNQSTRDISYMGDSL) the chain is Intravirion. A helical membrane pass occupies residues 127–147 (TAFLFILSMDTFQLFTLTMSF). Residues 148 to 151 (RLPS) lie on the Virion surface side of the membrane. Residues 152 to 172 (MIAFMAAVHFFCLTIFNVSMV) form a helical membrane-spanning segment. At 173 to 200 (TQYRSYKRSLFFFSRLHPKLKGTVQFRT) the chain is on the intravirion side. The helical transmembrane segment at 201–221 (LIVNLVEVALGFNTTVVAMAL) threads the bilayer. The Virion surface portion of the chain corresponds to 222-239 (CYGFGNNFFVRTGHMVLA). The helical transmembrane segment at 240–260 (VFVVYAIISIIYFLLIEAVFF) threads the bilayer. The Intravirion segment spans residues 261 to 264 (QYVK). A helical membrane pass occupies residues 265 to 285 (VQFGYHLGAFFGLCGLIYPIV). The Virion surface portion of the chain corresponds to 286 to 298 (QYDTFLSNEYRTG). A helical transmembrane segment spans residues 299–319 (ISWSFGMLFFIWAMFTTCRAV). The Intravirion portion of the chain corresponds to 320-371 (RYFRGRGSGSVKYQALATASGEEVAALSHHDSLESRRLREEEDDDDEDFEDA). The interval 346–371 (LSHHDSLESRRLREEEDDDDEDFEDA) is disordered. A compositionally biased stretch (basic and acidic residues) spans 347-359 (SHHDSLESRRLRE). Residues 360–371 (EEDDDDEDFEDA) are compositionally biased toward acidic residues.

This sequence belongs to the herpesviridae glycoprotein M family. Interacts (via N-terminus) with gN (via N-terminus). The gM-gN heterodimer forms the gCII complex.

Its subcellular location is the virion membrane. It localises to the host Golgi apparatus. The protein resides in the host trans-Golgi network. It is found in the host endosome membrane. The protein localises to the host nucleus inner membrane. Functionally, envelope glycoprotein important for virion assembly and egress. Plays a role in the correct incorporation of gH-gL into virion membrane. Directs the glycoprotein N (gN) to the host trans-Golgi network. The protein is Envelope glycoprotein M of Homo sapiens (Human).